Here is a 317-residue protein sequence, read N- to C-terminus: Cell division protein FtsQ (317 aa).

At 1–63 the chain is on the cytoplasmic side; sequence MDGGGRFVFA…RIHIPAHTGT (63 aa). A helical transmembrane segment spans residues 64 to 82; it reads ISAVAFYAMIGLYGMSLGG. At 83–317 the chain is on the periplasmic side; it reads HTNIVTQTTT…KALKKAEKNT (235 aa). In terms of domain architecture, POTRA spans 97–165; that stretch reads FAVEDVKVSG…KTVEVRLKER (69 aa).

The protein belongs to the FtsQ/DivIB family. FtsQ subfamily.

The protein resides in the cell inner membrane. In terms of biological role, essential cell division protein. The chain is Cell division protein FtsQ from Agrobacterium fabrum (strain C58 / ATCC 33970) (Agrobacterium tumefaciens (strain C58)).